The following is a 151-amino-acid chain: Caveolin-3 (151 aa).

Residues 1-83 (MMAEERTDLE…RLLSTLLGVP (83 aa)) lie on the Cytoplasmic side of the membrane. A Glycyl lysine isopeptide (Lys-Gly) (interchain with G-Cter in SUMO3) cross-link involves residue K38. The interval 64–114 (TFTVSKYWCYRLLSTLLGVPLALLWGFLFACISFCHIWAVVPCIKSYLIEI) is required for interaction with DAG1. The segment at residues 84–104 (LALLWGFLFACISFCHIWAVV) is an intramembrane region (helical). Residues 105–151 (PCIKSYLIEIQCISHIYSLCIRTFCNPVFAALGQVCSNIKVMLRKEV) are Cytoplasmic-facing.

It belongs to the caveolin family. As to quaternary structure, homooligomer. Interacts with DYSF. Interacts with DLG1 and KCNA5; forms a ternary complex. Interacts with DAG1 (via its C-terminal); the interaction prevents binding of DAG1 with DMD. Interacts with TRIM72. Interacts with MUSK; may regulate MUSK signaling. Interacts with POPDC1. Interacts with CAVIN1, CAVIN2 and CAVIN4. Post-translationally, sumoylation with SUMO3 by PIAS4 may reduce agonist-induced internalization and desensitization of adrenergic receptor ABRD2. As to expression, expressed specifically in skeletal muscle and heart.

It is found in the golgi apparatus membrane. It localises to the cell membrane. The protein resides in the membrane. Its subcellular location is the caveola. The protein localises to the sarcolemma. In terms of biological role, may act as a scaffolding protein within caveolar membranes. Interacts directly with G-protein alpha subunits and can functionally regulate their activity. May also regulate voltage-gated potassium channels. Plays a role in the sarcolemma repair mechanism of both skeletal muscle and cardiomyocytes that permits rapid resealing of membranes disrupted by mechanical stress. Mediates the recruitment of CAVIN2 and CAVIN3 proteins to the caveolae. This is Caveolin-3 (CAV3) from Sus scrofa (Pig).